We begin with the raw amino-acid sequence, 264 residues long: MVYIIIVSHGHEDYIKKLLENLNADDEHYKIIVRDNKDSLLLKQICQHYAGLDYISGGVYGFGHNNNIAVAYVKEKYRPADDDYILFLNPDIIMKHDDLLTYIKYVESKRYAFSTLCLFRDEAKSLHDYSVRKFPVLSDFIVSFMLGINKTKIPKESIYSDTVVDWCAGSFMLVRFSDFVRVNGFDQGYFMYCEDIDLCLRLSLAGVRLHYVPAFHAIHYAHHDNRSFFSKAFRWHLKSTFRYLARKRILSNRNFDRISSVFHP.

Belongs to the glycosyltransferase 2 family.

It participates in bacterial outer membrane biogenesis; lipopolysaccharide biosynthesis. Its function is as follows. Rhamnosyltransferase involved in lipopolysaccharide biosynthesis. This chain is Rhamnosyltransferase WbbL (wbbL), found in Escherichia coli (strain K12).